A 789-amino-acid polypeptide reads, in one-letter code: Homocitrate dehydratase, mitochondrial (789 aa).

Residues 1-14 constitute a mitochondrion transit peptide; sequence MLSSANRFYIKRHL. Substrate is bound by residues glutamine 96 and 189–191; that span reads DSH. Cysteine 385, cysteine 448, and cysteine 451 together coordinate [4Fe-4S] cluster. Residues arginine 476, arginine 481, lysine 610, and 672-673 contribute to the substrate site; that span reads AR.

It belongs to the aconitase/IPM isomerase family. The cofactor is [4Fe-4S] cluster.

The protein resides in the mitochondrion. It catalyses the reaction (2R)-homocitrate = cis-homoaconitate + H2O. It functions in the pathway amino-acid biosynthesis; L-lysine biosynthesis via AAA pathway; L-alpha-aminoadipate from 2-oxoglutarate: step 2/5. Functionally, catalyzes the reversible dehydration of (R)-homocitrate to cis-homoaconitate, a step in the alpha-aminoadipate pathway for lysine biosynthesis. The sequence is that of Homocitrate dehydratase, mitochondrial (ACO2) from Saccharomyces cerevisiae (strain ATCC 204508 / S288c) (Baker's yeast).